The sequence spans 70 residues: Probable ferredoxin TA0517 (70 aa).

2 consecutive 4Fe-4S ferredoxin-type domains span residues 8–36 and 37–66; these read TEMD…WLDE and TVIK…AEWF. Residues C17, C20, C23, C27, C46, C49, C52, and C56 each coordinate [4Fe-4S] cluster.

[4Fe-4S] cluster serves as cofactor.

In terms of biological role, ferredoxins are iron-sulfur proteins that transfer electrons in a wide variety of metabolic reactions. The polypeptide is Probable ferredoxin TA0517 (Thermoplasma acidophilum (strain ATCC 25905 / DSM 1728 / JCM 9062 / NBRC 15155 / AMRC-C165)).